Consider the following 2194-residue polypeptide: Supervillin (2194 aa).

The interval 1–174 (MKRKERIARR…SSYSRTELSG (174 aa)) is interaction with MYLK. Disordered regions lie at residues 35–98 (LEED…TQSL), 118–335 (EKYG…QRRH), 388–414 (PESI…KVLE), 450–500 (EDRG…TERM), 513–563 (AVSQ…QTSK), 589–667 (RASR…KVDE), 685–719 (KSFD…QPVT), and 739–791 (HPVM…DSST). S50 is modified (phosphoserine). The span at 87-98 (PYSSGIMDTQSL) shows a compositional bias: polar residues. Composition is skewed to basic and acidic residues over residues 139–161 (SRKD…ESSR) and 181–192 (ESKDYGLHRSDG). S245 and S262 each carry phosphoserine. Basic and acidic residues-rich tracts occupy residues 283 to 294 (PKHEWFLQKDSE) and 308 to 319 (KVREKLVREESA). Positions 320-330 (RSSPELTSESL) are enriched in polar residues. Phosphoserine is present on residues S321 and S322. Over residues 455 to 467 (GRSQEAPSGTEDL) the composition is skewed to polar residues. A compositionally biased stretch (low complexity) spans 540–551 (PPQLQALKAKAP). 2 stretches are compositionally biased toward basic and acidic residues: residues 592 to 615 (RKPE…ERGS) and 626 to 635 (ENRKTSERFR). S652 and S686 each carry phosphoserine. Positions 704-714 (QRLRRLQDRSH) are enriched in basic and acidic residues. Phosphoserine occurs at positions 747 and 781. Basic and acidic residues predominate over residues 770-782 (LARDQTNESKDSA). Residue Y829 is modified to Phosphotyrosine. T831 is modified (phosphothreonine). S893, S899, S903, S947, S979, and S1031 each carry phosphoserine. A disordered region spans residues 1036 to 1077 (EFGEPTSEQTGAAAGKPAAPTATPVSWKPQDPSEQPQEKRYQ). Residues 1045–1059 (TGAAAGKPAAPTATP) are compositionally biased toward low complexity. Phosphoserine is present on residues S1099 and S1205. Residue T1210 is modified to Phosphothreonine. S1214, S1302, and S1385 each carry phosphoserine. The tract at residues 1399 to 1667 (SNVSLRSVNL…KFLDWTELKR (269 aa)) is interaction with NEB. 5 Gelsolin-like repeats span residues 1421–1520 (KKLM…LGGQ), 1540–1662 (IETN…FLDW), 1732–1842 (ISVD…FQGG), 1861–1962 (WRLY…LGRR), and 1995–2102 (ATEF…FPSW). Residues 2131–2194 (KLCKTIYPLA…VNLKKAKGLF (64 aa)) form the HP domain.

It belongs to the villin/gelsolin family. As to quaternary structure, associates with F-actin. Interacts with NEB. Interacts with MYH9. Interacts with MYLK. Interacts with TASOR. In terms of assembly, interacts with TRIP6 and DYNLT1. Interacts with KIF14; at midbody during cytokinesis.

The protein resides in the cell membrane. It localises to the cytoplasm. It is found in the cytoskeleton. The protein localises to the cell projection. Its subcellular location is the invadopodium. The protein resides in the podosome. It localises to the midbody. It is found in the cleavage furrow. Its function is as follows. Forms a high-affinity link between the actin cytoskeleton and the membrane. Is among the first costameric proteins to assemble during myogenesis and it contributes to myogenic membrane structure and differentiation. Appears to be involved in myosin II assembly. May modulate myosin II regulation through MLCK during cell spreading, an initial step in cell migration. May play a role in invadopodial function. May be involved in modulation of focal adhesions. Supervillin-mediated down-regulation of focal adhesions involves binding to TRIP6. Plays a role in cytokinesis through KIF14 interaction. This is Supervillin from Bos taurus (Bovine).